The primary structure comprises 314 residues: MRIIVMGTPDFAVPSLQAIAAMGNGFDIVLVVTGQDKPRKSKHAAAEASPIKQAALALNLPVHEVDDVNDPHFAEIVAAYKPDVIVVAAFRILPPAVYSQARLGAFNLHASLLPAYRGAAPVNWAIMNGEEETGVTTFFLQQRVDTGTIIMQQKTAIAPEENATELIVRLANIGADVVVETLRRIAAKNAATAPQDDSLASRAPKLTRINTRINWEQPVATLHNFIRGLALKPSAWTTFNDKTLKIFRTTLSTPEHDHPSAPAGSLLVSHGKLYVHGSDGWLELLALQLEGRKPMEAADFARGLHVEGEALRLV.

Position 111 to 114 (111 to 114 (SLLP)) interacts with (6S)-5,6,7,8-tetrahydrofolate.

The protein belongs to the Fmt family.

The enzyme catalyses L-methionyl-tRNA(fMet) + (6R)-10-formyltetrahydrofolate = N-formyl-L-methionyl-tRNA(fMet) + (6S)-5,6,7,8-tetrahydrofolate + H(+). Attaches a formyl group to the free amino group of methionyl-tRNA(fMet). The formyl group appears to play a dual role in the initiator identity of N-formylmethionyl-tRNA by promoting its recognition by IF2 and preventing the misappropriation of this tRNA by the elongation apparatus. This Chlorobium chlorochromatii (strain CaD3) protein is Methionyl-tRNA formyltransferase.